The chain runs to 536 residues: Cytoplasmic dynein 2 intermediate chain 2 (536 aa).

S15 carries the phosphoserine modification. A DYNLL2 binding region spans residues R80–V93. The interval P106 to A131 is DYNLRB1 binding. 5 WD repeats span residues E215 to L255, T264 to L308, P390 to S430, L433 to T473, and Q480 to G520.

Belongs to the dynein light intermediate chain family. The cytoplasmic dynein 2 complex consists of two catalytic heavy chains (HCs) and a number of non-catalytic subunits presented by intermediate chains (ICs), light intermediate chains (LICs) and light chains (LCs). Among them, a heavy chain (DYNC2H1), two intermediate chains (DYNC2I2 and DYNC2I1), a light intermediate chain (DYNC2LI1), and a light chain (DYNLT2B) are unique to the cytoplasmic dynein complex 2, but a subset of the light chains are also shared by dynein-1 and dynein-2 complexes. Interacts with DYNC2I1; their C-terminal domains each bind a copy of the heavy chain, and their extended N-terminal regions are held together by an array of light chain dimers. Interacts with DYNLL2; this interaction is essential for dynein-2-mediated retrograde trafficking of ciliary proteins. Interacts with DYNLRB1; this interaction is essential for dynein-2-mediated retrograde trafficking of ciliary proteins. Interacts (via the WD domains) with MAP3K7 and TAB3. Interacts (via WD domains) with TAB2 (via C-terminus). Interacts (via WD domains) with TRAF6 (via TRAF-type domains). In terms of tissue distribution, expressed in several cell lines (at protein level).

The protein localises to the cytoplasm. Its subcellular location is the cytoskeleton. The protein resides in the cilium basal body. It localises to the cilium axoneme. It is found in the microtubule organizing center. The protein localises to the centrosome. Its subcellular location is the cell projection. The protein resides in the cilium. It localises to the filopodium. Functionally, acts as one of several non-catalytic accessory components of the cytoplasmic dynein 2 complex (dynein-2 complex), a motor protein complex that drives the movement of cargos along microtubules within cilia and flagella in concert with the intraflagellar transport (IFT) system. DYNC2I2 plays a major role in retrograde ciliary protein trafficking and in ciliogenesis. Required also to maintain a functional transition zone. In terms of biological role, acts as a negative regulator of the Toll-like and IL-1R receptor signaling pathways. Inhibits the MAP3K7-induced NF-kappa-B activation pathway. Inhibits MAP3K7 phosphorylation at 'Thr-184' and 'Thr-187' upon Il-1 beta stimulation. This is Cytoplasmic dynein 2 intermediate chain 2 from Homo sapiens (Human).